The primary structure comprises 134 residues: Large ribosomal subunit protein eL14 (134 aa).

The protein belongs to the eukaryotic ribosomal protein eL14 family. Component of the large ribosomal subunit (LSU). Mature yeast ribosomes consist of a small (40S) and a large (60S) subunit. The 40S small subunit contains 1 molecule of ribosomal RNA (18S rRNA) and at least 33 different proteins. The large 60S subunit contains 3 rRNA molecules (25S, 5.8S and 5S rRNA) and at least 46 different proteins.

It localises to the cytoplasm. The protein localises to the nucleus. Its function is as follows. Component of the ribosome, a large ribonucleoprotein complex responsible for the synthesis of proteins in the cell. The small ribosomal subunit (SSU) binds messenger RNAs (mRNAs) and translates the encoded message by selecting cognate aminoacyl-transfer RNA (tRNA) molecules. The large subunit (LSU) contains the ribosomal catalytic site termed the peptidyl transferase center (PTC), which catalyzes the formation of peptide bonds, thereby polymerizing the amino acids delivered by tRNAs into a polypeptide chain. The nascent polypeptides leave the ribosome through a tunnel in the LSU and interact with protein factors that function in enzymatic processing, targeting, and the membrane insertion of nascent chains at the exit of the ribosomal tunnel. This chain is Large ribosomal subunit protein eL14 (rpl14), found in Schizosaccharomyces pombe (strain 972 / ATCC 24843) (Fission yeast).